The following is a 448-amino-acid chain: C4-dicarboxylate transport protein (448 aa).

The next 9 membrane-spanning stretches (helical) occupy residues 13–33, 49–69, 81–101, 149–169, 193–213, 227–247, 294–314, 336–356, and 357–377; these read SLYAQVIFAVTIGVLLGHFYP, LIKMIIAPIIFCTVVVGIAGM, LALLYFEVMSTLALVVGLLVV, AFAKGEILQVLLFSVLFGFAL, IVGIIMKVAPIGAFGAMAFTI, LMGAFYLTCLIFVFGVLGIVS, VVGLVIPTGYSFNLDGTSIYL, TLLAVLLLTSKGAAGVTGSGF, and IVLAATLSAVGGVPVAGLALI.

It belongs to the dicarboxylate/amino acid:cation symporter (DAACS) (TC 2.A.23) family.

The protein resides in the cell inner membrane. Responsible for the transport of dicarboxylates such as succinate, fumarate, and malate from the periplasm across the membrane. The polypeptide is C4-dicarboxylate transport protein (Albidiferax ferrireducens (strain ATCC BAA-621 / DSM 15236 / T118) (Rhodoferax ferrireducens)).